The following is a 206-amino-acid chain: Putative transporter protein AmiS2 (206 aa).

7 consecutive transmembrane segments (helical) span residues 4-24, 29-49, 56-76, 86-106, 113-133, 142-162, and 173-193; these read VGLL…LGTV, ASVL…VMLI, SAVL…YVGI, GIGW…FLSF, VFGV…LVLG, FTGW…AFLI, and VAAG…ILAA.

The protein belongs to the AmiS/UreI family.

Its subcellular location is the cell membrane. In terms of biological role, possible transporter that might be responsible for the adsorption of amidase substrates or release of their hydrolysis products. In Rhodococcus erythropolis (Arthrobacter picolinophilus), this protein is Putative transporter protein AmiS2 (amiS2).